Here is a 457-residue protein sequence, read N- to C-terminus: Argininosuccinate lyase (457 aa).

The protein belongs to the lyase 1 family. Argininosuccinate lyase subfamily.

The protein localises to the cytoplasm. The catalysed reaction is 2-(N(omega)-L-arginino)succinate = fumarate + L-arginine. It functions in the pathway amino-acid biosynthesis; L-arginine biosynthesis; L-arginine from L-ornithine and carbamoyl phosphate: step 3/3. The protein is Argininosuccinate lyase of Shigella flexneri serotype 5b (strain 8401).